The following is a 113-amino-acid chain: MAKTVRKARDPLIPGEITTQPGEIELNVGRKTKTLKVANGGDRPIQIGSHFHFYEVNSAMKFDREEAYGMRLNIMAGTAVRFEPGQERTVELVELAGNRIVYGFNQKVMGKLK.

Belongs to the urease beta subunit family. As to quaternary structure, heterotrimer of UreA (gamma), UreB (beta) and UreC (alpha) subunits. Three heterotrimers associate to form the active enzyme.

The protein localises to the cytoplasm. It catalyses the reaction urea + 2 H2O + H(+) = hydrogencarbonate + 2 NH4(+). It participates in nitrogen metabolism; urea degradation; CO(2) and NH(3) from urea (urease route): step 1/1. In Nitrosospira multiformis (strain ATCC 25196 / NCIMB 11849 / C 71), this protein is Urease subunit beta.